We begin with the raw amino-acid sequence, 2276 residues long: Poly [ADP-ribose] polymerase tankyrase (2276 aa).

Basic residues-rich tracts occupy residues 1–15 (MARR…VKAA) and 87–98 (KAVKAPKVKAPS). Disordered stretches follow at residues 1–20 (MARR…KIDG) and 79–103 (SSKT…KGND). ANK repeat units follow at residues 345 to 374 (KNIT…TINI), 378 to 407 (DNWY…SVTM), 411 to 440 (QTET…DLEK), 461 to 490 (SGNS…IVVD), 498 to 527 (NRLT…LVEG), 531 to 560 (KKRT…SLTL), 564 to 593 (SGNT…NILS), 598 to 627 (WQLY…KDKA), 675 to 725 (SGQT…KVDV), 729 to 758 (EDNT…NKRN), 970 to 999 (KDDV…EMHL), 1171 to 1200 (NGNT…HVDL), 1204 to 1233 (DGNT…DVTE), 1472 to 1501 (GLIP…SLKT), and 1505 to 1535 (YGRT…AVVL). Residues 1570 to 1649 (VPARVESDEE…STGPKRKKLV (80 aa)) form a disordered region. Acidic residues-rich tracts occupy residues 1576–1590 (SDEE…ESGE) and 1612–1622 (SDDEDDDDDDS). An ANK 16 repeat occupies 1662–1706 (KENNPLHYFIEPLAWENVELLGDLAAANKTAIVQCLIDKRSPNPI). Residues 1788–1889 (GLVSFCDETQ…ANFRDMPKKY (102 aa)) form the WGR domain. Positions 1910 to 2045 (KNTEKDPIRR…EIETATRLLC (136 aa)) constitute a PARP alpha-helical domain. In terms of domain architecture, PARP catalytic spans 2047 to 2276 (AEFRQDLDRV…VLPKYIVMYK (230 aa)).

As to expression, expressed throughout the head and tail, in germ cells and somatic cells.

The protein resides in the nucleus. It is found in the chromosome. The enzyme catalyses NAD(+) + (ADP-D-ribosyl)n-acceptor = nicotinamide + (ADP-D-ribosyl)n+1-acceptor + H(+).. It catalyses the reaction L-aspartyl-[protein] + NAD(+) = 4-O-(ADP-D-ribosyl)-L-aspartyl-[protein] + nicotinamide. The catalysed reaction is L-glutamyl-[protein] + NAD(+) = 5-O-(ADP-D-ribosyl)-L-glutamyl-[protein] + nicotinamide. Poly[ADP-ribose] polymerases modify various nuclear proteins by poly(ADP-ribosyl)ation, a post-translational modification synthesized after DNA damage that appears as an obligatory step in a detection/signaling pathway leading to the reparation of DNA strand breaks and programmed cell death. This is Poly [ADP-ribose] polymerase tankyrase from Caenorhabditis elegans.